The sequence spans 427 residues: Serine hydroxymethyltransferase (427 aa).

Residues Leu122 and 126–128 each bind (6S)-5,6,7,8-tetrahydrofolate; that span reads GHL. Lys231 carries the post-translational modification N6-(pyridoxal phosphate)lysine. 355 to 357 contacts (6S)-5,6,7,8-tetrahydrofolate; sequence SPF.

It belongs to the SHMT family. As to quaternary structure, homodimer. The cofactor is pyridoxal 5'-phosphate.

It localises to the cytoplasm. It catalyses the reaction (6R)-5,10-methylene-5,6,7,8-tetrahydrofolate + glycine + H2O = (6S)-5,6,7,8-tetrahydrofolate + L-serine. The protein operates within one-carbon metabolism; tetrahydrofolate interconversion. Its pathway is amino-acid biosynthesis; glycine biosynthesis; glycine from L-serine: step 1/1. Catalyzes the reversible interconversion of serine and glycine with tetrahydrofolate (THF) serving as the one-carbon carrier. This reaction serves as the major source of one-carbon groups required for the biosynthesis of purines, thymidylate, methionine, and other important biomolecules. Also exhibits THF-independent aldolase activity toward beta-hydroxyamino acids, producing glycine and aldehydes, via a retro-aldol mechanism. The chain is Serine hydroxymethyltransferase from Nostoc sp. (strain PCC 7120 / SAG 25.82 / UTEX 2576).